The chain runs to 215 residues: Adenylate kinase (215 aa).

10-15 (GAGKGT) lines the ATP pocket. Residues 30-59 (STGDMFRAAMKNNTELGKKAKSFMDNGDLV) form an NMP region. Residues Thr-31, Arg-36, 57–59 (DLV), 85–88 (GFPR), and Gln-92 contribute to the AMP site. The tract at residues 126–163 (GRWICRTCGKTYHEIYNPPKVPGKCDLDGGELYQRDDD) is LID. An ATP-binding site is contributed by Arg-127. The Zn(2+) site is built by Cys-130 and Cys-133. ATP is bound at residue 136 to 137 (TY). Zn(2+) is bound by residues Cys-150 and Asp-153. Residues Arg-160 and Arg-171 each coordinate AMP. An ATP-binding site is contributed by Gln-199.

It belongs to the adenylate kinase family. Monomer.

The protein resides in the cytoplasm. The catalysed reaction is AMP + ATP = 2 ADP. The protein operates within purine metabolism; AMP biosynthesis via salvage pathway; AMP from ADP: step 1/1. In terms of biological role, catalyzes the reversible transfer of the terminal phosphate group between ATP and AMP. Plays an important role in cellular energy homeostasis and in adenine nucleotide metabolism. This Listeria monocytogenes serotype 4b (strain CLIP80459) protein is Adenylate kinase.